Here is a 144-residue protein sequence, read N- to C-terminus: MLLAMVLTSALLLCSVAGQGCPTLAGILDINFLINKMQEDPASKCHCSANVTSCLCLGIPSDNCTRPCFSERLSQMTNTTMQTRYPLIFSRVKKSVEVLKNNKCPYFSCEQPCNQTTAGNALTFLKSLLEIFQKEKMRGMRGKI.

The N-terminal stretch at 1–18 is a signal peptide; sequence MLLAMVLTSALLLCSVAG. Glutamine 19 bears the Pyrrolidone carboxylic acid mark. N-linked (GlcNAc...) asparagine glycosylation is found at asparagine 50, asparagine 63, asparagine 78, and asparagine 114.

This sequence belongs to the IL-7/IL-9 family. Interacts with IL9R. Interacts with IL2RG.

It is found in the secreted. Multifunctional cytokine secreted mainly by T-helper 2 lymphocytes and also mast cells or NKT cells that plays important roles in the immune response against parasites. Affects intestinal epithelial permeability and adaptive immunity. In addition, induces the differentiation of specific T-cell subsets such as IL-17 producing helper T-cells (TH17) and also proliferation and differentiation of mast cells. Mechanistically, exerts its biological effects through a receptor composed of IL9R subunit and a signal transducing subunit IL2RG. Receptor stimulation results in the rapid activation of JAK1 and JAK3 kinase activities leading to STAT1, STAT3 and STAT5-mediated transcriptional programs. Induction of differentiation genes seems to be mediated by STAT1 alone, while protection of cells from apoptosis depends on STAT3 and STAT5. This chain is Interleukin-9 (IL9), found in Homo sapiens (Human).